Consider the following 348-residue polypeptide: Dihydroorotase (348 aa).

Residues His14 and His16 each contribute to the Zn(2+) site. Residues 16–18 (HLR) and Asn42 each bind substrate. Zn(2+) contacts are provided by Lys100, His137, and His175. Residue Lys100 is modified to N6-carboxylysine. His137 contributes to the substrate binding site. Leu220 provides a ligand contact to substrate. Asp248 is a Zn(2+) binding site. Residue Asp248 is part of the active site. Residues His252 and Ala264 each coordinate substrate.

It belongs to the metallo-dependent hydrolases superfamily. DHOase family. Class II DHOase subfamily. As to quaternary structure, homodimer. Zn(2+) serves as cofactor.

The catalysed reaction is (S)-dihydroorotate + H2O = N-carbamoyl-L-aspartate + H(+). Its pathway is pyrimidine metabolism; UMP biosynthesis via de novo pathway; (S)-dihydroorotate from bicarbonate: step 3/3. In terms of biological role, catalyzes the reversible cyclization of carbamoyl aspartate to dihydroorotate. The sequence is that of Dihydroorotase from Pseudomonas putida (strain GB-1).